A 596-amino-acid polypeptide reads, in one-letter code: Bromodomain-containing protein 9 (596 aa).

A compositionally biased stretch (basic residues) spans 1 to 10 (MGKKHKKHKA). Disordered stretches follow at residues 1-26 (MGKK…PLEK) and 38-137 (EVTE…AENE). A compositionally biased stretch (basic and acidic residues) spans 50–62 (SYYDDRSDHERER). Phosphoserine is present on Ser56. Over residues 63–73 (HREKKKKKKKK) the composition is skewed to basic residues. Positions 74-85 (SEKEKHLDEEER) are enriched in basic and acidic residues. Residues 86 to 97 (RKRKEEKKRKRE) are compositionally biased toward basic residues. A compositionally biased stretch (basic and acidic residues) spans 111–126 (DPGKKVEVEPPPDRPV). Residues 136–240 (NESTPIQRLL…HAGFKMMSKA (105 aa)) form the Bromo domain. A histone H4K5ac H4K8ac and histone H4K5bu H4K8bu binding region spans residues 214-216 (TYN). Residue Lys372 is modified to N6-acetyllysine; alternate. A Glycyl lysine isopeptide (Lys-Gly) (interchain with G-Cter in SUMO2); alternate cross-link involves residue Lys372. Positions 536-596 (AQAERGGSRP…SPEPAAPAKN (61 aa)) are disordered. Residues 543–555 (SRPSSNLSSLSTA) are compositionally biased toward low complexity. A phosphoserine mark is found at Ser565 and Ser587.

As to quaternary structure, binds acetylated histones H3 and H4. Binds butyrylated histone H4. Component of the multiprotein chromatin-remodeling subcomplex SWI/SNF called GBAF, which includes at least BICRA or BICRAL (mutually exclusive), BRD9, SS18, the core BAF subunits, SMARCA2/BRM, SMARCA4/BRG1/BAF190A, ACTL6A/BAF53, SMARCC1/BAF155, and SMARCD1/BAF60A. Interacts (via N-terminal bromodomain) with acetylated RAD54. Interacts (via C-terminus) with RAD51.

It is found in the nucleus. Plays a role in chromatin remodeling and regulation of transcription. Acts as a chromatin reader that recognizes and binds acylated histones: binds histones that are acetylated and/or butyrylated. Component of SWI/SNF chromatin remodeling subcomplex GBAF that carries out key enzymatic activities, changing chromatin structure by altering DNA-histone contacts within a nucleosome in an ATP-dependent manner. Also orchestrates the RAD51-RAD54 complex formation and thereby plays a role in homologous recombination (HR). In Mus musculus (Mouse), this protein is Bromodomain-containing protein 9 (Brd9).